The primary structure comprises 278 residues: Putative pyruvate, phosphate dikinase regulatory protein (278 aa).

Position 156-163 (156-163) interacts with ADP; the sequence is GVSRTSKT.

The protein belongs to the pyruvate, phosphate/water dikinase regulatory protein family. PDRP subfamily.

It catalyses the reaction N(tele)-phospho-L-histidyl/L-threonyl-[pyruvate, phosphate dikinase] + ADP = N(tele)-phospho-L-histidyl/O-phospho-L-threonyl-[pyruvate, phosphate dikinase] + AMP + H(+). It carries out the reaction N(tele)-phospho-L-histidyl/O-phospho-L-threonyl-[pyruvate, phosphate dikinase] + phosphate + H(+) = N(tele)-phospho-L-histidyl/L-threonyl-[pyruvate, phosphate dikinase] + diphosphate. Bifunctional serine/threonine kinase and phosphorylase involved in the regulation of the pyruvate, phosphate dikinase (PPDK) by catalyzing its phosphorylation/dephosphorylation. This chain is Putative pyruvate, phosphate dikinase regulatory protein, found in Lactobacillus acidophilus (strain ATCC 700396 / NCK56 / N2 / NCFM).